A 1377-amino-acid polypeptide reads, in one-letter code: DNA-directed RNA polymerase subunit beta (1377 aa).

It belongs to the RNA polymerase beta chain family. As to quaternary structure, the RNAP catalytic core consists of 2 alpha, 1 beta, 1 beta' and 1 omega subunit. When a sigma factor is associated with the core the holoenzyme is formed, which can initiate transcription.

The catalysed reaction is RNA(n) + a ribonucleoside 5'-triphosphate = RNA(n+1) + diphosphate. Functionally, DNA-dependent RNA polymerase catalyzes the transcription of DNA into RNA using the four ribonucleoside triphosphates as substrates. The sequence is that of DNA-directed RNA polymerase subunit beta from Brucella melitensis biotype 2 (strain ATCC 23457).